The primary structure comprises 478 residues: Ribosomal RNA small subunit methyltransferase F (478 aa).

S-adenosyl-L-methionine contacts are provided by residues 121–127 (ASAPGSK), Glu145, Asp172, and Asp190. Catalysis depends on Cys243, which acts as the Nucleophile.

Belongs to the class I-like SAM-binding methyltransferase superfamily. RsmB/NOP family.

Its subcellular location is the cytoplasm. It carries out the reaction cytidine(1407) in 16S rRNA + S-adenosyl-L-methionine = 5-methylcytidine(1407) in 16S rRNA + S-adenosyl-L-homocysteine + H(+). Specifically methylates the cytosine at position 1407 (m5C1407) of 16S rRNA. The sequence is that of Ribosomal RNA small subunit methyltransferase F from Shewanella sediminis (strain HAW-EB3).